The primary structure comprises 515 residues: RNA-splicing ligase RtcB homolog (515 aa).

Mn(2+) contacts are provided by Asp121, Cys124, His229, His269, and His363. Asn228–Glu232 is a binding site for GMP. Residues His363 to Asn364, Gly412 to Met415, Ser419, His438 to Gly441, and Lys514 each bind GMP. Catalysis depends on His438, which acts as the GMP-histidine intermediate.

Belongs to the RtcB family. As to quaternary structure, catalytic component of the tRNA-splicing ligase complex. It depends on Mn(2+) as a cofactor.

The catalysed reaction is a 3'-end 3'-phospho-ribonucleotide-RNA + a 5'-end dephospho-ribonucleoside-RNA + GTP = a ribonucleotidyl-ribonucleotide-RNA + GMP + diphosphate. It carries out the reaction a 3'-end 2',3'-cyclophospho-ribonucleotide-RNA + a 5'-end dephospho-ribonucleoside-RNA + GTP + H2O = a ribonucleotidyl-ribonucleotide-RNA + GMP + diphosphate + H(+). Catalytic subunit of the tRNA-splicing ligase complex that acts by directly joining spliced tRNA halves to mature-sized tRNAs by incorporating the precursor-derived splice junction phosphate into the mature tRNA as a canonical 3',5'-phosphodiester. May act as an RNA ligase with broad substrate specificity, and may function toward other RNAs. The sequence is that of RNA-splicing ligase RtcB homolog from Theileria annulata.